Consider the following 112-residue polypeptide: uncharacterized protein (112 aa).

The protein to U.parvum UU089.1.

This is an uncharacterized protein from Synechocystis sp. (strain ATCC 27184 / PCC 6803 / Kazusa).